Consider the following 319-residue polypeptide: Dehydrogenase/reductase SDR family member 9 (319 aa).

Residues 1-20 form the signal peptide; sequence MLLWVLALLFLCAFLWNYKG. Residues 34–58 and D83 each bind NAD(+); that span reads ITGC…RVIA. Residue S164 participates in substrate binding. The active-site Proton acceptor is the Y176. K180 contributes to the NAD(+) binding site.

This sequence belongs to the short-chain dehydrogenases/reductases (SDR) family. As to quaternary structure, homotetramer. As to expression, highly expressed in epithelium of estrus uterus.

The protein resides in the microsome membrane. Its subcellular location is the endoplasmic reticulum membrane. The catalysed reaction is 3beta-hydroxy-5alpha-pregnane-20-one + NAD(+) = 5alpha-pregnane-3,20-dione + NADH + H(+). The enzyme catalyses 17beta-hydroxy-5alpha-androstan-3-one + NAD(+) = 5alpha-androstan-3,17-dione + NADH + H(+). It carries out the reaction androsterone + NAD(+) = 5alpha-androstan-3,17-dione + NADH + H(+). It catalyses the reaction 5alpha-androstane-3alpha,17beta-diol + NAD(+) = 17beta-hydroxy-5alpha-androstan-3-one + NADH + H(+). The catalysed reaction is all-trans-retinol + NAD(+) = all-trans-retinal + NADH + H(+). The enzyme catalyses 3alpha-hydroxy-5alpha-pregnan-20-one + NAD(+) = 5alpha-pregnane-3,20-dione + NADH + H(+). In terms of biological role, 3-alpha-hydroxysteroid dehydrogenase that converts 3-alpha-tetrahydroprogesterone (allopregnanolone) to dihydroxyprogesterone and 3-alpha-androstanediol to dihydroxyprogesterone. Plays also role in the biosynthesis of retinoic acid from retinaldehyde. Can utilize both NADH and NADPH. The protein is Dehydrogenase/reductase SDR family member 9 (Dhrs9) of Rattus norvegicus (Rat).